The chain runs to 511 residues: Transcription factor bHLH28 (511 aa).

The region spanning 339–388 (DKPLNHVEAERMRREKLNHRFYALRAVVPNVSKMDKTSLLEDAVCYINEL) is the bHLH domain.

As to quaternary structure, homodimer.

The protein localises to the nucleus. This Arabidopsis thaliana (Mouse-ear cress) protein is Transcription factor bHLH28 (BHLH28).